The chain runs to 283 residues: uncharacterized protein (283 aa).

In terms of domain architecture, FAD-binding FR-type spans 4–131 (RPLHAFEVVA…MGPGGAYAPD (128 aa)).

This is an uncharacterized protein from Mycobacterium bovis (strain ATCC BAA-935 / AF2122/97).